Here is a 338-residue protein sequence, read N- to C-terminus: Probable tRNA pseudouridine synthase B (338 aa).

Aspartate 78 serves as the catalytic Nucleophile. The PUA domain occupies 245-320 (LPKIILRDSA…IAASPIRVLM (76 aa)).

It belongs to the pseudouridine synthase TruB family. Type 2 subfamily.

The enzyme catalyses uridine(55) in tRNA = pseudouridine(55) in tRNA. Its function is as follows. Could be responsible for synthesis of pseudouridine from uracil-55 in the psi GC loop of transfer RNAs. The polypeptide is Probable tRNA pseudouridine synthase B (Methanosarcina mazei (strain ATCC BAA-159 / DSM 3647 / Goe1 / Go1 / JCM 11833 / OCM 88) (Methanosarcina frisia)).